We begin with the raw amino-acid sequence, 337 residues long: MVREKVTVSTRTLKWKCVESRTDSKRLYYGRFILSPLMKGQADTIGIAMRRALLGEIEGTCITRVKSEKVPHEYSTIMGIQESVHEILMNLKEIVLRSNLYGTSDASICVKGPGYVTAQDIILPPYVEIVDNTQHIASLTETIDFCIGLQIKRNRGYLIKTPHNFQDGSYPIDAVFMPVRNANHSIHSYGNGNEKQEILFLEIWTNGSLTPKEALHEASRNLIDLFIPFLHIEEDNLYLQDNQHTVPLSPFTFHDKLAKLIKNKKKIALKSIFIDQSELPSRIYNCLKMSNIYTLLDLLNNSQEDLMKIEHFRSEDVKQILGILEKYFVIDLAKNEF.

The tract at residues 1-233 (MVREKVTVST…DLFIPFLHIE (233 aa)) is alpha N-terminal domain (alpha-NTD). The segment at 265 to 337 (KKIALKSIFI…FVIDLAKNEF (73 aa)) is alpha C-terminal domain (alpha-CTD).

The protein belongs to the RNA polymerase alpha chain family. In terms of assembly, in plastids the minimal PEP RNA polymerase catalytic core is composed of four subunits: alpha, beta, beta', and beta''. When a (nuclear-encoded) sigma factor is associated with the core the holoenzyme is formed, which can initiate transcription.

The protein resides in the plastid. Its subcellular location is the chloroplast. The catalysed reaction is RNA(n) + a ribonucleoside 5'-triphosphate = RNA(n+1) + diphosphate. In terms of biological role, DNA-dependent RNA polymerase catalyzes the transcription of DNA into RNA using the four ribonucleoside triphosphates as substrates. The sequence is that of DNA-directed RNA polymerase subunit alpha from Nicotiana tomentosiformis (Tobacco).